The sequence spans 314 residues: Polyamine aminopropyltransferase (314 aa).

A PABS domain is found at 4-241; the sequence is GMYFFEHVTP…LNFGFLLASD (238 aa). Glutamine 33 contributes to the S-methyl-5'-thioadenosine binding site. Residues histidine 64 and glutamate 88 each coordinate spermidine. S-methyl-5'-thioadenosine contacts are provided by residues aspartate 108 and 140–141; that span reads DA. Residue aspartate 158 is the Proton acceptor of the active site. An S-methyl-5'-thioadenosine-binding site is contributed by proline 168.

It belongs to the spermidine/spermine synthase family. As to quaternary structure, homodimer or homotetramer.

It localises to the cytoplasm. The catalysed reaction is S-adenosyl 3-(methylsulfanyl)propylamine + putrescine = S-methyl-5'-thioadenosine + spermidine + H(+). The protein operates within amine and polyamine biosynthesis; spermidine biosynthesis; spermidine from putrescine: step 1/1. Functionally, catalyzes the irreversible transfer of a propylamine group from the amino donor S-adenosylmethioninamine (decarboxy-AdoMet) to putrescine (1,4-diaminobutane) to yield spermidine. This chain is Polyamine aminopropyltransferase, found in Thermus thermophilus (strain ATCC BAA-163 / DSM 7039 / HB27).